Here is a 581-residue protein sequence, read N- to C-terminus: Putative ABC transporter ATP-binding protein MM_1996 (581 aa).

An ABC transporter 1 domain is found at isoleucine 10–arginine 250. Glycine 44–serine 51 lines the ATP pocket. Residues glycine 287–asparagine 309 form a disordered region. Residues serine 300 to asparagine 309 show a composition bias toward polar residues. Residues valine 313 to threonine 541 enclose the ABC transporter 2 domain. Glycine 346–serine 353 lines the ATP pocket.

This sequence belongs to the ABC transporter superfamily.

The protein resides in the cell membrane. Functionally, probably part of an ABC transporter complex. Responsible for energy coupling to the transport system. The sequence is that of Putative ABC transporter ATP-binding protein MM_1996 from Methanosarcina mazei (strain ATCC BAA-159 / DSM 3647 / Goe1 / Go1 / JCM 11833 / OCM 88) (Methanosarcina frisia).